A 182-amino-acid polypeptide reads, in one-letter code: UPF0149 protein CGSHiGG_07585 (182 aa).

It belongs to the UPF0149 family.

The protein is UPF0149 protein CGSHiGG_07585 of Haemophilus influenzae (strain PittGG).